The chain runs to 147 residues: Ubiquitin-like-conjugating enzyme ATG10 (147 aa).

Cys-116 (glycyl thioester intermediate) is an active-site residue.

It belongs to the ATG10 family. As to quaternary structure, forms homooligomers. Interacts with ATG10. Interacts with ATG7 and ATG12.

The protein resides in the preautophagosomal structure membrane. In terms of biological role, E2-like enzyme required for the cytoplasm to vacuole transport (Cvt), autophagy and nucleophagy. Acts as an E2-like enzyme that catalyzes the conjugation of ATG12 to ATG5. ATG12 conjugation to ATG5 is required for proper localization of ATG8 to the preautophagosomal structure (PAS). Likely serves as an ATG5-recognition molecule. The chain is Ubiquitin-like-conjugating enzyme ATG10 from Kluyveromyces marxianus (strain DMKU3-1042 / BCC 29191 / NBRC 104275) (Yeast).